Consider the following 192-residue polypeptide: MEERNEQVVEEVKEEVKEAQVEEAVTSEDSEETVEEKSEAALLQEKVDELQAKLTETEGRMLRLQADFENYKRRVQMDKQAAEKYRAQSLVSDILPALDNFERAMQVEATDEQMKSLLQGMEMVYRQLLEAMTKEGVEAIEAVGKQFDPHEHQAVMQVEDSEFESNAVVEEFQKGYKLKDRVIRPSMVKVNQ.

The span at 1 to 20 (MEERNEQVVEEVKEEVKEAQ) shows a compositional bias: basic and acidic residues. The disordered stretch occupies residues 1-34 (MEERNEQVVEEVKEEVKEAQVEEAVTSEDSEETV). The segment covering 25–34 (VTSEDSEETV) has biased composition (acidic residues).

It belongs to the GrpE family. In terms of assembly, homodimer.

It localises to the cytoplasm. In terms of biological role, participates actively in the response to hyperosmotic and heat shock by preventing the aggregation of stress-denatured proteins, in association with DnaK and GrpE. It is the nucleotide exchange factor for DnaK and may function as a thermosensor. Unfolded proteins bind initially to DnaJ; upon interaction with the DnaJ-bound protein, DnaK hydrolyzes its bound ATP, resulting in the formation of a stable complex. GrpE releases ADP from DnaK; ATP binding to DnaK triggers the release of the substrate protein, thus completing the reaction cycle. Several rounds of ATP-dependent interactions between DnaJ, DnaK and GrpE are required for fully efficient folding. The protein is Protein GrpE of Bacillus cereus (strain AH187).